The sequence spans 364 residues: Putative serine/threonine-protein phosphatase C06A1.3 (364 aa).

The tract at residues 1 to 24 (MSTDGNNNKKGSKEGPKSSEISKF) is disordered. A compositionally biased stretch (basic and acidic residues) spans 11–24 (GSKEGPKSSEISKF). Mn(2+)-binding residues include D93, H95, D121, and N153. H154 functions as the Proton donor in the catalytic mechanism. Residues H202 and H277 each coordinate Mn(2+).

It belongs to the PPP phosphatase family. PP-1 subfamily. Requires Mn(2+) as cofactor.

The catalysed reaction is O-phospho-L-seryl-[protein] + H2O = L-seryl-[protein] + phosphate. It carries out the reaction O-phospho-L-threonyl-[protein] + H2O = L-threonyl-[protein] + phosphate. This chain is Putative serine/threonine-protein phosphatase C06A1.3, found in Caenorhabditis elegans.